Here is a 443-residue protein sequence, read N- to C-terminus: Tol-Pal system protein TolB (443 aa).

An N-terminal signal peptide occupies residues 1–31 (MMIMTTRTFFSWFIVICAFWLTSFSSVPVHA). Positions 422 to 443 (ERQLPTPNDASDPAWSPLLNIQ) are disordered.

The protein belongs to the TolB family. In terms of assembly, the Tol-Pal system is composed of five core proteins: the inner membrane proteins TolA, TolQ and TolR, the periplasmic protein TolB and the outer membrane protein Pal. They form a network linking the inner and outer membranes and the peptidoglycan layer.

The protein localises to the periplasm. Functionally, part of the Tol-Pal system, which plays a role in outer membrane invagination during cell division and is important for maintaining outer membrane integrity. The protein is Tol-Pal system protein TolB of Bartonella henselae (strain ATCC 49882 / DSM 28221 / CCUG 30454 / Houston 1) (Rochalimaea henselae).